A 374-amino-acid chain; its full sequence is 5-hydroxytryptamine receptor 1D (374 aa).

Topologically, residues 1-35 (MSPPNQSLEGLPQEASNRSLNVTGAWDPEVLQALR) are extracellular. N5, N17, and N21 each carry an N-linked (GlcNAc...) asparagine glycan. The chain crosses the membrane as a helical span at residues 36-61 (ISLVVVLSVITLATVLSNAFVLTTIL). The Cytoplasmic portion of the chain corresponds to 62 to 72 (LTKKLHTPANY). A helical transmembrane segment spans residues 73 to 94 (LIGSLATTDLLVSILVMPISIA). Topologically, residues 95–106 (YTTTRTWNFGQI) are extracellular. A helical membrane pass occupies residues 107–131 (LCDIWVSSDITCCTASILHLCVIAL). A disulfide bridge connects residues C108 and C185. Residues D115 and C119 each coordinate serotonin. A DRY motif; important for ligand-induced conformation changes motif is present at residues 132 to 134 (DRY). The Cytoplasmic segment spans residues 132-151 (DRYWAITDALEYSKRRTAGH). A helical transmembrane segment spans residues 152–173 (AAAMIAAVWIISICISIPPLFW). Residues 174-191 (RQATAHEEMSDCLVNTSQ) are Extracellular-facing. The chain crosses the membrane as a helical span at residues 192 to 215 (ISYTIYSTCGAFYIPSILLIILYG). Topologically, residues 216-297 (RIYVAARSRI…ISAARERKAT (82 aa)) are cytoplasmic. Residues 298-323 (KTLGIILGAFIICWLPFFVVSLVLPI) traverse the membrane as a helical segment. A serotonin-binding site is contributed by S318. At 324 to 332 (CRDSCWIHP) the chain is on the extracellular side. The chain crosses the membrane as a helical span at residues 333–356 (ALFDFFTWLGYLNSLINPVIYTVF). An NPxxY motif; important for ligand-induced conformation changes and signaling motif is present at residues 349–353 (NPVIY). Topologically, residues 357–374 (NEDFRQAFQKVVHFRKIS) are cytoplasmic.

This sequence belongs to the G-protein coupled receptor 1 family. As to quaternary structure, homodimer. Heterodimer with HTR1B. Detected in the motor column in spinal cord, and in several cranial motor nuclei, including nucleus ambiguous, oculomotoris, trochelaris and abducens. Detected in gamma motor neurons in the lumbar spinal cord. Detected in proprioceptive sensory neurons in dorsal root ganglia.

It is found in the cell membrane. Functionally, G-protein coupled receptor for 5-hydroxytryptamine (serotonin). Also functions as a receptor for ergot alkaloid derivatives, various anxiolytic and antidepressant drugs and other psychoactive substances. Ligand binding causes a conformation change that triggers signaling via guanine nucleotide-binding proteins (G proteins) and modulates the activity of downstream effectors, such as adenylate cyclase. HTR1D is coupled to G(i)/G(o) G alpha proteins and mediates inhibitory neurotransmission by inhibiting adenylate cyclase activity. Regulates the release of 5-hydroxytryptamine in the brain, and thereby affects neural activity. May also play a role in regulating the release of other neurotransmitters. May play a role in vasoconstriction. This Mus musculus (Mouse) protein is 5-hydroxytryptamine receptor 1D (Htr1d).